Here is a 326-residue protein sequence, read N- to C-terminus: MRLPVTVKATKPSFLVIWIRYSSAASSPTVSLNPSGRLQQTLAGSVEVKGKSLHSGKFSTVKLNPEIAGAGRFFEFRSRFIPASIEFAQESPLCTTLLKDELKIRTVEHLLSALEAKGVDNCRIQIESESSDDREVEVPIFDGSAKEWVDAIQGVGINAAQNHDGESVEKMVAHVNKPVYVCKNDTFVAAFPALETRITCGIDFPQVPAIGCQWFSWRPIHESSFAKDIASSRTFCVYEEVERMREAGLIKGGSLDNAIVCSAEHGWMNPPLRFDDEACRHKILDLIGDLSLVSRGGNGGLPVAHIVAYKAGHALHTDLARHLTMD.

Residues 1–21 (MRLPVTVKATKPSFLVIWIRY) constitute a mitochondrion transit peptide. 3 residues coordinate Zn(2+): His109, His281, and Asp285.

This sequence belongs to the LpxC family. Zn(2+) is required as a cofactor.

It is found in the mitochondrion. The catalysed reaction is a UDP-3-O-[(3R)-3-hydroxyacyl]-N-acetyl-alpha-D-glucosamine + H2O = a UDP-3-O-[(3R)-3-hydroxyacyl]-alpha-D-glucosamine + acetate. It functions in the pathway glycolipid biosynthesis; lipid IV(A) biosynthesis; lipid IV(A) from (3R)-3-hydroxytetradecanoyl-[acyl-carrier-protein] and UDP-N-acetyl-alpha-D-glucosamine: step 2/6. In terms of biological role, involved in the biosynthesis of lipid A, a phosphorylated glycolipid that in bacteria anchors the lipopolysaccharide to the outer membrane of the cell. Lipid A-like molecules in plants may serve as structural components of the outer membranes of mitochondria and/or chloroplasts, or may be involved in signal transduction or plant defense responses (Potential). The chain is Probable UDP-3-O-acyl-N-acetylglucosamine deacetylase 2, mitochondrial (LPXC2) from Arabidopsis thaliana (Mouse-ear cress).